Reading from the N-terminus, the 222-residue chain is Putative N-acetylmannosamine-6-phosphate 2-epimerase (222 aa).

It belongs to the NanE family.

It carries out the reaction an N-acyl-D-glucosamine 6-phosphate = an N-acyl-D-mannosamine 6-phosphate. It functions in the pathway amino-sugar metabolism; N-acetylneuraminate degradation; D-fructose 6-phosphate from N-acetylneuraminate: step 3/5. Its function is as follows. Converts N-acetylmannosamine-6-phosphate (ManNAc-6-P) to N-acetylglucosamine-6-phosphate (GlcNAc-6-P). This Staphylococcus aureus (strain MSSA476) protein is Putative N-acetylmannosamine-6-phosphate 2-epimerase.